A 221-amino-acid chain; its full sequence is MLAFEHHGVVPYEEAWARQRELHALRVADEIPDTCLLLEHPPVYTAGKRTEDFERPTDGTPVIAVDRGGRITWHGPGQLVGYPIVKLPMPIDAVGHVRRIEQALIAVCADLGVTAVRVPGRSGVWITSPGAPDRKIAAIGVRISRCTTMHGFALNCNPDLSWFRRIVPCGLPDAEVTSLSVELGRNVTVAEVRPLVVARLTEFLLPARPTDRVPTPQSAAN.

The BPL/LPL catalytic domain occupies 29–208; the sequence is DEIPDTCLLL…RLTEFLLPAR (180 aa). Residues 67–74, 138–140, and 151–153 contribute to the substrate site; these read RGGRITWH, AIG, and GFA. C169 (acyl-thioester intermediate) is an active-site residue.

The protein belongs to the LipB family.

It is found in the cytoplasm. It catalyses the reaction octanoyl-[ACP] + L-lysyl-[protein] = N(6)-octanoyl-L-lysyl-[protein] + holo-[ACP] + H(+). Its pathway is protein modification; protein lipoylation via endogenous pathway; protein N(6)-(lipoyl)lysine from octanoyl-[acyl-carrier-protein]: step 1/2. Catalyzes the transfer of endogenously produced octanoic acid from octanoyl-acyl-carrier-protein onto the lipoyl domains of lipoate-dependent enzymes. Lipoyl-ACP can also act as a substrate although octanoyl-ACP is likely to be the physiological substrate. The polypeptide is Octanoyltransferase (Acidothermus cellulolyticus (strain ATCC 43068 / DSM 8971 / 11B)).